Consider the following 527-residue polypeptide: GMP synthase [glutamine-hydrolyzing] (527 aa).

In terms of domain architecture, Glutamine amidotransferase type-1 spans 19 to 212; it reads KIIVLDYGSQ…AFSICGAKGD (194 aa). Residue C96 is the Nucleophile of the active site. Catalysis depends on residues H186 and E188. The 190-residue stretch at 213–402 folds into the GMPS ATP-PPase domain; it reads WSMANFVDMQ…LGMPDEVVWR (190 aa). 240-246 contacts ATP; that stretch reads SGGVDSS.

As to quaternary structure, homodimer.

The catalysed reaction is XMP + L-glutamine + ATP + H2O = GMP + L-glutamate + AMP + diphosphate + 2 H(+). It functions in the pathway purine metabolism; GMP biosynthesis; GMP from XMP (L-Gln route): step 1/1. Catalyzes the synthesis of GMP from XMP. This chain is GMP synthase [glutamine-hydrolyzing], found in Streptococcus thermophilus (strain CNRZ 1066).